The following is a 625-amino-acid chain: Phosphomethylpyrimidine synthase (625 aa).

Substrate is bound by residues N230, M259, Y288, H324, S344–G346, D385–R388, and E424. H428 serves as a coordination point for Zn(2+). Y451 is a substrate binding site. Residue H492 coordinates Zn(2+). Positions 572, 575, and 580 each coordinate [4Fe-4S] cluster.

Belongs to the ThiC family. Homodimer. Requires [4Fe-4S] cluster as cofactor.

It catalyses the reaction 5-amino-1-(5-phospho-beta-D-ribosyl)imidazole + S-adenosyl-L-methionine = 4-amino-2-methyl-5-(phosphooxymethyl)pyrimidine + CO + 5'-deoxyadenosine + formate + L-methionine + 3 H(+). Its pathway is cofactor biosynthesis; thiamine diphosphate biosynthesis. Catalyzes the synthesis of the hydroxymethylpyrimidine phosphate (HMP-P) moiety of thiamine from aminoimidazole ribotide (AIR) in a radical S-adenosyl-L-methionine (SAM)-dependent reaction. The polypeptide is Phosphomethylpyrimidine synthase (Xanthomonas euvesicatoria pv. vesicatoria (strain 85-10) (Xanthomonas campestris pv. vesicatoria)).